A 129-amino-acid polypeptide reads, in one-letter code: MARPKRVGKKKEKKSIPVGVAHIQATFNNTIITFTDTRGNTVSWASAGQSGFKGSRKSTPFAAQIAADQAARRAQENGMRTVGIFVKGPGSGRESAMRAINAAGFKVAFIRDITPIPHNGCRPPKRRRV.

The protein belongs to the universal ribosomal protein uS11 family. Part of the 30S ribosomal subunit. Interacts with proteins S7 and S18. Binds to IF-3.

Its function is as follows. Located on the platform of the 30S subunit, it bridges several disparate RNA helices of the 16S rRNA. Forms part of the Shine-Dalgarno cleft in the 70S ribosome. The sequence is that of Small ribosomal subunit protein uS11 from Oleidesulfovibrio alaskensis (strain ATCC BAA-1058 / DSM 17464 / G20) (Desulfovibrio alaskensis).